A 723-amino-acid chain; its full sequence is Probable G-protein coupled receptor 149 (723 aa).

At 1 to 31 (MSVMPSNLSLNGTSFFAENHSIMDKPNEQRT) the chain is on the extracellular side. Asn7, Asn11, and Asn19 each carry an N-linked (GlcNAc...) asparagine glycan. Residues 32 to 52 (LNVFLFCSTFIIAFTVLLGSI) traverse the membrane as a helical segment. Topologically, residues 53 to 69 (YSLVSLLKLQNKSTISM) are cytoplasmic. Residues 70–90 (IVTSLSIDDLISIVPVIIFML) form a helical membrane-spanning segment. Residues 91 to 106 (TQWSSDALPQPLCTTS) lie on the Extracellular side of the membrane. An intrachain disulfide couples Cys103 to Cys181. The helical transmembrane segment at 107 to 127 (ALIYLFQGISSNLKGSLIVSY) threads the bilayer. Residues 128–148 (NFYSINKTETMNCSASKRRVS) are Cytoplasmic-facing. Residues 149–169 (MVWAILSIWIVSLLICILPLC) traverse the membrane as a helical segment. Topologically, residues 170-188 (GWGKYIPTTWGCFTDHASS) are extracellular. The helical transmembrane segment at 189–209 (YILFLFIVYSLCFCLLTVLSV) threads the bilayer. Residues 210 to 306 (PLTYQLLCSD…SFTVGFAQKR (97 aa)) are Cytoplasmic-facing. The helical transmembrane segment at 307-327 (FSLILALTKVILWLPMMIQMV) threads the bilayer. Residues 328 to 338 (VQHITGYQSFS) lie on the Extracellular side of the membrane. A helical membrane pass occupies residues 339–359 (FETLSFLLTLLAATVTPVFVL). Residues 360-723 (SEHWIHLPCG…RKREEDGNSN (364 aa)) are Cytoplasmic-facing. Residues 451 to 513 (TTDSARPGPA…ERRLSHEEGH (63 aa)) are disordered. The segment covering 501 to 513 (EGPERRLSHEEGH) has biased composition (basic and acidic residues).

Belongs to the G-protein coupled receptor 1 family. Specific expression in peripheral nervous system, including nerve growth factor-dependent sensory and sympathetic neurons, as well as enteric neurons.

It is found in the cell membrane. Its function is as follows. Orphan receptor. The chain is Probable G-protein coupled receptor 149 (GPR149) from Gallus gallus (Chicken).